A 110-amino-acid polypeptide reads, in one-letter code: UPF0145 protein (110 aa).

Belongs to the UPF0145 family.

This is UPF0145 protein from Listeria ivanovii.